Consider the following 567-residue polypeptide: Urease subunit alpha (567 aa).

In terms of domain architecture, Urease spans G129 to F567. Ni(2+)-binding residues include H134, H136, and K217. K217 carries the N6-carboxylysine modification. H219 serves as a coordination point for substrate. The Ni(2+) site is built by H246 and H272. The active-site Proton donor is the H320. D360 contributes to the Ni(2+) binding site.

The protein belongs to the metallo-dependent hydrolases superfamily. Urease alpha subunit family. Heterotrimer of UreA (gamma), UreB (beta) and UreC (alpha) subunits. Three heterotrimers associate to form the active enzyme. Requires Ni cation as cofactor. Post-translationally, carboxylation allows a single lysine to coordinate two nickel ions.

It is found in the cytoplasm. It carries out the reaction urea + 2 H2O + H(+) = hydrogencarbonate + 2 NH4(+). It functions in the pathway nitrogen metabolism; urea degradation; CO(2) and NH(3) from urea (urease route): step 1/1. In Pseudomonas putida (strain ATCC 47054 / DSM 6125 / CFBP 8728 / NCIMB 11950 / KT2440), this protein is Urease subunit alpha.